The primary structure comprises 164 residues: C-phycoerythrin alpha chain (164 aa).

(2R,3E)-phycoerythrobilin contacts are provided by cysteine 82 and cysteine 139.

This sequence belongs to the phycobiliprotein family. In terms of assembly, heterodimer of an alpha and a beta chain. In terms of processing, contains two covalently linked bilin chromophores.

Its subcellular location is the cellular thylakoid membrane. Light-harvesting photosynthetic bile pigment-protein from the phycobiliprotein complex. The protein is C-phycoerythrin alpha chain (cpeA) of Pseudanabaena tenuis (strain PCC 7409).